The chain runs to 198 residues: Glycerol-3-phosphate acyltransferase (198 aa).

Helical transmembrane passes span 6 to 26 (MLPVALLIGYLLGSIPFGLIL), 56 to 78 (LAAATLLGDALKGTAAVIIAGYL), 83 to 101 (AAMLAGLGAFLGHLFPVWL), 113 to 133 (IGILIGLLWPYAIFFCLVWLA), and 154 to 174 (IVLWAFGHTALAALFALLTLL).

It belongs to the PlsY family. Probably interacts with PlsX.

Its subcellular location is the cell inner membrane. The catalysed reaction is an acyl phosphate + sn-glycerol 3-phosphate = a 1-acyl-sn-glycero-3-phosphate + phosphate. The protein operates within lipid metabolism; phospholipid metabolism. Its function is as follows. Catalyzes the transfer of an acyl group from acyl-phosphate (acyl-PO(4)) to glycerol-3-phosphate (G3P) to form lysophosphatidic acid (LPA). This enzyme utilizes acyl-phosphate as fatty acyl donor, but not acyl-CoA or acyl-ACP. This chain is Glycerol-3-phosphate acyltransferase, found in Bradyrhizobium sp. (strain ORS 278).